The primary structure comprises 208 residues: Small ribosomal subunit protein uS4 (208 aa).

The disordered stretch occupies residues 24–52 (GVKPFDVKTKKANKAPGQHGQARGGKQSE). One can recognise an S4 RNA-binding domain in the interval 98–160 (SRLDNVVYRM…AKQQLRIKNA (63 aa)).

The protein belongs to the universal ribosomal protein uS4 family. As to quaternary structure, part of the 30S ribosomal subunit. Contacts protein S5. The interaction surface between S4 and S5 is involved in control of translational fidelity.

One of the primary rRNA binding proteins, it binds directly to 16S rRNA where it nucleates assembly of the body of the 30S subunit. Functionally, with S5 and S12 plays an important role in translational accuracy. The protein is Small ribosomal subunit protein uS4 of Acinetobacter baumannii (strain ACICU).